The following is a 65-amino-acid chain: Temporin-SN1 (65 aa).

A signal peptide spans 1–22 (MFTTKKSLLLLFFLGTINLSLC). A propeptide spans 23–44 (QEERNAEEERRDGDDEGGVEVQ) (removed in mature form). Residue Lys-65 is modified to Lysine amide.

The protein belongs to the frog skin active peptide (FSAP) family. Temporin subfamily. In terms of tissue distribution, expressed by the skin glands.

The protein resides in the secreted. In terms of biological role, antimicrobial peptide. Active against a variety of Gram-positive bacterial strains. Not active against Gram-negative bacteria and against fungi. Shows hemolytic activity against human erythrocytes. The sequence is that of Temporin-SN1 from Sylvirana spinulosa (Fine-spined frog).